A 783-amino-acid polypeptide reads, in one-letter code: Cation/H(+) antiporter 11 (783 aa).

Helical transmembrane passes span 31–51 (VVFGYSLPLLEIQIILIFFCI), 61–81 (IGVSQIVSYMIAGLILGPQLF), 101–120 (AALRCISVFGRLMFTFLMTV), 135–155 (VVIGIVSFFAPLFSLSFLNLF), 175–195 (VIVITQSQILLPSTTYILLEL), 205–225 (LALSASAINDMLGIFAMIVAT), 244–264 (AVIIFFLIVFFVFKPMVQWII), 276–295 (IYIHAVILTAFASAAYFVFF), 300–322 (VLGPLIIGIIIPEGPPLGSALEA), 360–380 (IFLTLLILVIKLVACLTLCLY), 389–409 (LAVSLILSYKSFVEFVLYEAV), and 418–438 (ATYAFLILYSLLSAGIVPMVV).

It belongs to the monovalent cation:proton antiporter 2 (CPA2) transporter (TC 2.A.37) family. CHX (TC 2.A.37.4) subfamily. As to expression, specifically expressed in pollen.

Its subcellular location is the membrane. May operate as a cation/H(+) antiporter. The protein is Cation/H(+) antiporter 11 (CHX11) of Arabidopsis thaliana (Mouse-ear cress).